We begin with the raw amino-acid sequence, 405 residues long: MTKPSVHEHPGVLADNGLCEPKTPAGRRLLDLLERYLPALEAESRDNDREATLPVHLFDRMRKEGVLGATVPEDLGGLGVHSLHDVALALARIAGRDAGVALALHMQFSRGLTLDFEWRHGAPSTRPLAEDLLRQMGAGEAVICGAVKDVRGTTVLTRATDGSYRLNGRKTLVSMAGIATHYVVSTRLEEAGAPVRLAAPVVARTTPGLTVLDNWDGMGMRSSGSVDIVFDGCPVDRDRVLPRGEPGVRDDAALAGQTVSSIAMLGIYVGIAEAARRIALTELRRRGGAPAGVRTTVAEIDARLFALHTAVASALTTADRLADDLSGDLAARGRAMMTPFQYAKLLVNRHSVGVVDDCLMLVGGAGYSNSHPLARLYRDVRAGGFMHPYNFTDGVDYLSEVALGR.

Positions 117 and 332 each coordinate dTDP.

The protein belongs to the acyl-CoA dehydrogenase family. As to quaternary structure, homotetramer. It depends on FAD as a cofactor.

Its pathway is antibiotic biosynthesis. Its function is as follows. Nitrososynthase involved in the biosynthesis of baumycin. Catalyzes the double-oxidation of TDP-L-epi-vancosamine to TDP-L-epi-vancosonitrose. The rapid turnover of TDP-L-epi-vancosamine suggests that this compound, or a closely related analog, is the natural substrate for DnmZ. Can also catalyze the double-oxidation of TDP-L-evernosamine to TDP-L-evernitrosose. This chain is Amino sugar nitrososynthase DnmZ, found in Streptomyces peucetius.